The sequence spans 157 residues: 2-C-methyl-D-erythritol 2,4-cyclodiphosphate synthase (157 aa).

Residues D8 and H10 each coordinate a divalent metal cation. 4-CDP-2-C-methyl-D-erythritol 2-phosphate is bound by residues 8–10 (DVH) and 34–35 (HS). Position 42 (H42) interacts with a divalent metal cation. 4-CDP-2-C-methyl-D-erythritol 2-phosphate contacts are provided by residues 56–58 (DIG), 61–65 (FPDTD), 100–106 (AQRPKMA), 132–135 (TTEE), and F139.

The protein belongs to the IspF family. Homotrimer. The cofactor is a divalent metal cation.

The enzyme catalyses 4-CDP-2-C-methyl-D-erythritol 2-phosphate = 2-C-methyl-D-erythritol 2,4-cyclic diphosphate + CMP. Its pathway is isoprenoid biosynthesis; isopentenyl diphosphate biosynthesis via DXP pathway; isopentenyl diphosphate from 1-deoxy-D-xylulose 5-phosphate: step 4/6. Its function is as follows. Involved in the biosynthesis of isopentenyl diphosphate (IPP) and dimethylallyl diphosphate (DMAPP), two major building blocks of isoprenoid compounds. Catalyzes the conversion of 4-diphosphocytidyl-2-C-methyl-D-erythritol 2-phosphate (CDP-ME2P) to 2-C-methyl-D-erythritol 2,4-cyclodiphosphate (ME-CPP) with a corresponding release of cytidine 5-monophosphate (CMP). The chain is 2-C-methyl-D-erythritol 2,4-cyclodiphosphate synthase from Trichlorobacter lovleyi (strain ATCC BAA-1151 / DSM 17278 / SZ) (Geobacter lovleyi).